The sequence spans 1464 residues: Collagen alpha-1(I) chain (1464 aa).

The N-terminal stretch at 1–22 (MFSFVDLRLLLLLAATALLTHG) is a signal peptide. A propeptide spans 23–161 (QEEGQVEGQD…PPGLGGNFAP (139 aa)) (N-terminal propeptide). Residues 38-96 (ITCVQNGLRYHDRDVWKPEPCRICVCDNGKVLCDDVICDETKNCPGAEVPEGECCPVCP) form the VWFC domain. The tract at residues 98–1214 (GSESPTDQET…PQEKAHDGGR (1117 aa)) is disordered. The span at 138–153 (PGLPGPPGPPGPPGPP) shows a compositional bias: pro residues. Pyrrolidone carboxylic acid is present on Gln162. Residues 162–178 (QLSYGYDEKSTGGISVP) are nonhelical region (N-terminal). The residue at position 170 (Lys170) is an Allysine. Ser171 carries the post-translational modification Phosphoserine. The interval 179-1192 (GPMGPSGPRG…PGPPGPPGPP (1014 aa)) is triple-helical region. A 4-hydroxyproline mark is found at Pro190, Pro193, Pro196, Pro205, Pro208, Pro211, Pro226, Pro241, Pro247, Pro256, and Pro262. Positions 198–217 (PQGFQGPPGEPGEPGASGPM) are enriched in low complexity. Residues 229–243 (NGDDGEAGKPGRPGE) are compositionally biased toward basic and acidic residues. The residue at position 265 (Lys265) is a 5-hydroxylysine; alternate. O-linked (Gal...) hydroxylysine; alternate glycosylation occurs at Lys265. Ser271 is subject to Phosphoserine. Residues 279-295 (DAGPAGPKGEPGSPGEN) are compositionally biased toward low complexity. Pro289, Pro292, Pro298, Pro307, and Pro313 each carry 4-hydroxyproline. The segment covering 318–331 (PAGARGNDGATGAA) has biased composition (low complexity). Pro residues predominate over residues 333–345 (PPGPTGPAGPPGF). Residues Pro334, Pro343, Pro346, Pro373, Pro376, Pro388, Pro394, Pro403, Pro409, Pro412, and Pro427 each carry the 4-hydroxyproline modification. Residues 379-418 (AGAAGPAGNPGADGQPGAKGANGAPGIAGAPGFPGARGPS) are compositionally biased toward low complexity. Lys430 is modified (5-hydroxylysine). 4-hydroxyproline is present on residues Pro436, Pro439, Pro451, Pro460, Pro475, Pro481, Pro490, and Pro496. Low complexity predominate over residues 448-457 (KGEPGPVGVQ). Residues 485 to 494 (GERGGPGSRG) show a composition bias toward gly residues. Residue Lys505 is modified to 5-hydroxylysine. 4-hydroxyproline is present on residues Pro514, Pro523, Pro529, Pro535, Pro544, Pro547, Pro556, Pro565, Pro571, Pro583, Pro592, Pro601, Pro604, Pro622, Pro640, Pro646, Pro652, Pro658, Pro664, Pro670, Pro682, Pro691, Pro703, Pro715, Pro718, Pro724, Pro730, and Pro739. Residues 538 to 564 (KGLTGSPGSPGPDGKTGPPGPAGQDGR) show a composition bias toward low complexity. Over residues 573 to 592 (ARGQAGVMGFPGPKGAAGEP) the composition is skewed to low complexity. Low complexity predominate over residues 634–661 (QGPAGSPGFQGLPGPAGPPGEAGKPGEQ). Positions 696-724 (PRGANGAPGNDGAKGDAGAPGAPGSQGAP) are enriched in low complexity. The Cell attachment site motif lies at 745-747 (RGD). Lys751 is modified (5-hydroxylysine). Pro757, Pro772, and Pro778 each carry 4-hydroxyproline. Over residues 784-798 (SGPSGPAGPTGARGA) the composition is skewed to low complexity. A Phosphoserine modification is found at Ser787. 8 positions are modified to 4-hydroxyproline: Pro799, Pro805, Pro808, Pro817, Pro823, Pro841, Pro850, and Pro859. A compositionally biased stretch (low complexity) spans 811–838 (AGFAGPPGADGQPGAKGEPGDAGAKGDA). Residues 840–852 (PPGPAGPAGPPGP) are compositionally biased toward pro residues. A compositionally biased stretch (low complexity) spans 853-883 (IGNVGAPGAKGARGSAGPPGATGFPGAAGRV). Lys862 is subject to 5-hydroxylysine. Residues Pro871 and Pro877 each carry the 4-hydroxyproline modification. The residue at position 885 (Pro885) is a 3-hydroxyproline. A 4-hydroxyproline mark is found at Pro886, Pro895, Pro898, Pro919, Pro928, Pro937, Pro946, Pro964, Pro973, Pro976, Pro982, Pro997, Pro1003, Pro1009, Pro1018, and Pro1024. Over residues 912–921 (ETGPAGRPGE) the composition is skewed to low complexity. The segment covering 931-955 (AGEKGSPGADGPAGAPGTPGPQGIA) has biased composition (low complexity). The segment covering 996–1006 (PPGPMGPPGLA) has biased composition (pro residues). Residue Lys1033 is modified to 5-hydroxylysine. Residues 1042 to 1057 (AGPPGAPGAPGAPGPV) are compositionally biased toward pro residues. 3 positions are modified to 4-hydroxyproline: Pro1045, Pro1048, and Pro1051. Low complexity predominate over residues 1078–1092 (VGPVGARGPAGPQGP). The Cell attachment site motif lies at 1093 to 1095 (RGD). Basic and acidic residues predominate over residues 1093–1107 (RGDKGETGEQGDRGI). 5-hydroxylysine is present on Lys1096. The residue at position 1108 (Lys1108) is a 5-hydroxylysine; alternate. O-linked (Gal...) hydroxylysine; alternate glycosylation occurs at Lys1108. Residues Pro1120, Pro1123, Pro1126, Pro1144, and Pro1159 each carry the 4-hydroxyproline modification. Residues 1126–1159 (PGEQGPSGASGPAGPRGPPGSAGAPGKDGLNGLP) are compositionally biased toward low complexity. Pro1164 is subject to 3-hydroxyproline. Pro1165 carries the 4-hydroxyproline modification. Pro residues predominate over residues 1177–1192 (VGPPGPPGPPGPPGPP). 3-hydroxyproline is present on Pro1179. Pro1180 bears the 4-hydroxyproline mark. Position 1182 is a 3-hydroxyproline (Pro1182). Pro1183 bears the 4-hydroxyproline mark. The residue at position 1185 (Pro1185) is a 3-hydroxyproline. Pro1186, Pro1189, and Pro1192 each carry 4-hydroxyproline. The nonhelical region (C-terminal) stretch occupies residues 1193 to 1218 (SAGFDFSFLPQPPQEKAHDGGRYYRA). Allysine is present on Lys1208. A propeptide spans 1219–1464 (DDANVVRDRD…GFDVGPVCFL (246 aa)) (C-terminal propeptide). The 236-residue stretch at 1229–1464 (LEVDTTLKSL…GFDVGPVCFL (236 aa)) folds into the Fibrillar collagen NC1 domain. 3 disulfides stabilise this stretch: Cys1259-Cys1291, Cys1299-Cys1462, and Cys1370-Cys1415. Positions 1277, 1279, 1280, 1282, and 1285 each coordinate Ca(2+). N-linked (GlcNAc...) asparagine glycosylation occurs at Asn1365.

It belongs to the fibrillar collagen family. Trimers of one alpha 2(I) and two alpha 1(I) chains. Interacts with MRC2. Interacts with TRAM2. Interacts with MFAP4 in a Ca (2+)-dependent manner. In terms of processing, contains mostly 4-hydroxyproline. Proline residues at the third position of the tripeptide repeating unit (G-X-Y) are hydroxylated in some or all of the chains. Contains 3-hydroxyproline at a few sites. This modification occurs on the first proline residue in the sequence motif Gly-Pro-Hyp, where Hyp is 4-hydroxyproline. Post-translationally, lysine residues at the third position of the tripeptide repeating unit (G-X-Y) are 5-hydroxylated in some or all of the chains. In terms of processing, O-glycosylated on hydroxylated lysine residues. The O-linked glycan consists of a Glc-Gal disaccharide. Forms the fibrils of tendon, ligaments and bones. In bones the fibrils are mineralized with calcium hydroxyapatite.

The protein resides in the secreted. It localises to the extracellular space. It is found in the extracellular matrix. Its function is as follows. Type I collagen is a member of group I collagen (fibrillar forming collagen). This Homo sapiens (Human) protein is Collagen alpha-1(I) chain (COL1A1).